The chain runs to 777 residues: Phosphoribosylformylglycinamidine synthase subunit PurL (777 aa).

His50 is an active-site residue. Positions 53 and 92 each coordinate ATP. Glu94 provides a ligand contact to Mg(2+). Substrate contacts are provided by residues 95–98 and Arg117; that span reads SHNH. The active-site Proton acceptor is the His96. A Mg(2+)-binding site is contributed by Asp118. Gln241 serves as a coordination point for substrate. Asp269 contributes to the Mg(2+) binding site. 313–315 is a substrate binding site; that stretch reads ESQ. Positions 520 and 557 each coordinate ATP. Asn558 provides a ligand contact to Mg(2+). Position 560 (Ser560) interacts with substrate.

The protein belongs to the FGAMS family. Monomer. Part of the FGAM synthase complex composed of 1 PurL, 1 PurQ and 2 PurS subunits.

It localises to the cytoplasm. The catalysed reaction is N(2)-formyl-N(1)-(5-phospho-beta-D-ribosyl)glycinamide + L-glutamine + ATP + H2O = 2-formamido-N(1)-(5-O-phospho-beta-D-ribosyl)acetamidine + L-glutamate + ADP + phosphate + H(+). It functions in the pathway purine metabolism; IMP biosynthesis via de novo pathway; 5-amino-1-(5-phospho-D-ribosyl)imidazole from N(2)-formyl-N(1)-(5-phospho-D-ribosyl)glycinamide: step 1/2. Part of the phosphoribosylformylglycinamidine synthase complex involved in the purines biosynthetic pathway. Catalyzes the ATP-dependent conversion of formylglycinamide ribonucleotide (FGAR) and glutamine to yield formylglycinamidine ribonucleotide (FGAM) and glutamate. The FGAM synthase complex is composed of three subunits. PurQ produces an ammonia molecule by converting glutamine to glutamate. PurL transfers the ammonia molecule to FGAR to form FGAM in an ATP-dependent manner. PurS interacts with PurQ and PurL and is thought to assist in the transfer of the ammonia molecule from PurQ to PurL. The protein is Phosphoribosylformylglycinamidine synthase subunit PurL of Trichormus variabilis (strain ATCC 29413 / PCC 7937) (Anabaena variabilis).